Reading from the N-terminus, the 217-residue chain is Small ribosomal subunit protein uS3c (217 aa).

One can recognise a KH type-2 domain in the interval 43 to 117; it reads IKNYVQKNRK…KLNIAITRIA (75 aa).

Belongs to the universal ribosomal protein uS3 family. As to quaternary structure, part of the 30S ribosomal subunit.

The protein resides in the plastid. It is found in the chloroplast. This Ranunculus macranthus (Large buttercup) protein is Small ribosomal subunit protein uS3c (rps3).